A 330-amino-acid polypeptide reads, in one-letter code: Cytoplasmic envelopment protein 2 (330 aa).

Belongs to the herpesviridae cytoplasmic envelopment protein 2 family. Interacts with cytoplasmic envelopment protein 3 and with the capsid.

It localises to the virion tegument. The protein resides in the host cytoplasm. The protein localises to the host nucleus. Plays a critical role in cytoplasmic virus egress. Participates in the final step of tegumentation and envelope acquisition within the host cytoplasm by directly interacting with the capsid. Upon virion binding to target cell, a signaling cascade is triggered to disrupt the interaction with the capsid, thereby preparing capsid uncoating. In Saimiriine herpesvirus 2 (strain 11) (SaHV-2), this protein is Cytoplasmic envelopment protein 2 (33).